The sequence spans 333 residues: Cytochrome f (333 aa).

The first 44 residues, 1–44 (MRNASVTARLTRSVRAIVKTLLIAIATVTFYFSCDLALPQSAAA), serve as a signal peptide directing secretion. Heme contacts are provided by Tyr-45, Cys-66, Cys-69, and His-70. A helical transmembrane segment spans residues 301–318 (GLIAFVALVMLAQVMLVL).

It belongs to the cytochrome f family. In terms of assembly, the 4 large subunits of the cytochrome b6-f complex are cytochrome b6, subunit IV (17 kDa polypeptide, PetD), cytochrome f and the Rieske protein, while the 4 small subunits are PetG, PetL, PetM and PetN. The complex functions as a dimer. Heme serves as cofactor.

The protein resides in the cellular thylakoid membrane. Functionally, component of the cytochrome b6-f complex, which mediates electron transfer between photosystem II (PSII) and photosystem I (PSI), cyclic electron flow around PSI, and state transitions. The protein is Cytochrome f (petA) of Desmonostoc sp. (strain PCC 7906) (Nostoc sp. (strain PCC 7906)).